Reading from the N-terminus, the 432-residue chain is tRNA(Ile)-lysidine synthase (432 aa).

20-25 serves as a coordination point for ATP; sequence SGGLDS.

The protein belongs to the tRNA(Ile)-lysidine synthase family.

Its subcellular location is the cytoplasm. The enzyme catalyses cytidine(34) in tRNA(Ile2) + L-lysine + ATP = lysidine(34) in tRNA(Ile2) + AMP + diphosphate + H(+). Functionally, ligates lysine onto the cytidine present at position 34 of the AUA codon-specific tRNA(Ile) that contains the anticodon CAU, in an ATP-dependent manner. Cytidine is converted to lysidine, thus changing the amino acid specificity of the tRNA from methionine to isoleucine. The protein is tRNA(Ile)-lysidine synthase of Shigella flexneri.